Consider the following 134-residue polypeptide: MAKAPASNAAQRVRKKVRKNVADGIAHVHASFNNTIITITDRQGNALSWASSGGQGFKGSRKSTPFAAQVASEVAGRAAIEQGVKNLDVEIKGPGPGRESSVRALAALGIRINMIADVTPVPHNGCRPQKRRRI.

It belongs to the universal ribosomal protein uS11 family. Part of the 30S ribosomal subunit. Interacts with proteins S7 and S18. Binds to IF-3.

Located on the platform of the 30S subunit, it bridges several disparate RNA helices of the 16S rRNA. Forms part of the Shine-Dalgarno cleft in the 70S ribosome. The chain is Small ribosomal subunit protein uS11 from Albidiferax ferrireducens (strain ATCC BAA-621 / DSM 15236 / T118) (Rhodoferax ferrireducens).